The chain runs to 344 residues: tRNA N6-adenosine threonylcarbamoyltransferase (344 aa).

Fe cation-binding residues include H110 and H114. Substrate-binding positions include 133–137 (AVSGA), D166, G179, and N278. D303 is a Fe cation binding site.

Belongs to the KAE1 / TsaD family. Fe(2+) is required as a cofactor.

It localises to the cytoplasm. It carries out the reaction L-threonylcarbamoyladenylate + adenosine(37) in tRNA = N(6)-L-threonylcarbamoyladenosine(37) in tRNA + AMP + H(+). Its function is as follows. Required for the formation of a threonylcarbamoyl group on adenosine at position 37 (t(6)A37) in tRNAs that read codons beginning with adenine. Is involved in the transfer of the threonylcarbamoyl moiety of threonylcarbamoyl-AMP (TC-AMP) to the N6 group of A37, together with TsaE and TsaB. TsaD likely plays a direct catalytic role in this reaction. The chain is tRNA N6-adenosine threonylcarbamoyltransferase from Chlamydia caviae (strain ATCC VR-813 / DSM 19441 / 03DC25 / GPIC) (Chlamydophila caviae).